A 55-amino-acid chain; its full sequence is Large ribosomal subunit protein bL33 (55 aa).

Belongs to the bacterial ribosomal protein bL33 family.

In Zymomonas mobilis subsp. mobilis (strain ATCC 31821 / ZM4 / CP4), this protein is Large ribosomal subunit protein bL33.